The chain runs to 633 residues: Threonine--tRNA ligase (633 aa).

The TGS domain maps to Met1–Thr61. The catalytic stretch occupies residues Asp242–Pro533. Positions 333, 384, and 510 each coordinate Zn(2+).

It belongs to the class-II aminoacyl-tRNA synthetase family. In terms of assembly, homodimer. The cofactor is Zn(2+).

The protein localises to the cytoplasm. The enzyme catalyses tRNA(Thr) + L-threonine + ATP = L-threonyl-tRNA(Thr) + AMP + diphosphate + H(+). Functionally, catalyzes the attachment of threonine to tRNA(Thr) in a two-step reaction: L-threonine is first activated by ATP to form Thr-AMP and then transferred to the acceptor end of tRNA(Thr). Also edits incorrectly charged L-seryl-tRNA(Thr). This is Threonine--tRNA ligase from Ehrlichia canis (strain Jake).